Here is a 237-residue protein sequence, read N- to C-terminus: Ribonuclease PH (237 aa).

Residues R86 and 124–126 (GTR) contribute to the phosphate site.

It belongs to the RNase PH family. As to quaternary structure, homohexameric ring arranged as a trimer of dimers.

The enzyme catalyses tRNA(n+1) + phosphate = tRNA(n) + a ribonucleoside 5'-diphosphate. Its function is as follows. Phosphorolytic 3'-5' exoribonuclease that plays an important role in tRNA 3'-end maturation. Removes nucleotide residues following the 3'-CCA terminus of tRNAs; can also add nucleotides to the ends of RNA molecules by using nucleoside diphosphates as substrates, but this may not be physiologically important. Probably plays a role in initiation of 16S rRNA degradation (leading to ribosome degradation) during starvation. This is Ribonuclease PH from Nitrobacter winogradskyi (strain ATCC 25391 / DSM 10237 / CIP 104748 / NCIMB 11846 / Nb-255).